Consider the following 503-residue polypeptide: Sodium/hydrogen exchanger 3 (503 aa).

At 1-22 (MVIGLSTMLEKTEALFASDHAS) the chain is on the cytoplasmic side. Residues 23–43 (VVSMNLFVALLCACIVLGHLL) traverse the membrane as a helical segment. At 44–51 (EETRWMNE) the chain is on the vacuolar side. An N-linked (GlcNAc...) asparagine glycan is attached at Asn-50. The chain crosses the membrane as a helical span at residues 52-72 (SITALIIGSCTGIVILLISGG). Over 73-76 (KSSR) the chain is Cytoplasmic. An intramembrane region (helical) is located at residues 77 to 97 (ILVFSEDLFFIYLLPPIIFNA). Topologically, residues 98-109 (GFQVKKKQFFRN) are cytoplasmic. Residues 110 to 130 (FMTIMLFGAIGTLISFVIISF) traverse the membrane as a helical segment. The Vacuolar segment spans residues 131–138 (GAKHLFEK). Residues 139–159 (MNIGDLTIADYLAIGAIFSAT) traverse the membrane as a helical segment. Residues 160-174 (DSVCTLQVLNQDETP) are Cytoplasmic-facing. The helical transmembrane segment at 175-195 (LLYSLVFGEGVVNDATSVVLF) threads the bilayer. Residues 196–219 (NAIQRFDLTNINSAIALEFAGNFF) are Vacuolar-facing. Residues 220-240 (YLFILSTALGVAAGLLSAFVI) form a helical membrane-spanning segment. Over 241–265 (KKLYIGRHSTDREVALMMLLAYLSY) the chain is Cytoplasmic. The chain crosses the membrane as a helical span at residues 266–286 (MLAELFHLSSILTVFFCGIVM). Residues 287 to 305 (SHYTWHNVTDKSKVTTKHT) lie on the Vacuolar side of the membrane. Asn-293 is a glycosylation site (N-linked (GlcNAc...) asparagine). A helical membrane pass occupies residues 306–326 (FAAMSFLAEIFIFLYVGMDAL). At 327–345 (DIEKWDVVRNSPGQSIGVS) the chain is on the cytoplasmic side. A helical transmembrane segment spans residues 346-366 (SILLGLILLGRAAFVFPLSFL). At 367 to 383 (SNLTKSSPDEKIDLKKQ) the chain is on the vacuolar side. Asn-368 carries N-linked (GlcNAc...) asparagine glycosylation. Residues 384-406 (VTIWWAGLMRGAVSMALAYNQFT) form a helical membrane-spanning segment. The Cytoplasmic segment spans residues 407–416 (TSGHTKVLGN). Residues 417-437 (AIMITSTITVVLFSTVVFGLL) traverse the membrane as a helical segment. The Vacuolar segment spans residues 438–503 (TKPLVKHLQP…FWKSPSRFTH (66 aa)).

It belongs to the monovalent cation:proton antiporter 1 (CPA1) transporter (TC 2.A.36) family. In terms of tissue distribution, expressed in roots.

Its subcellular location is the vacuole membrane. It catalyses the reaction Na(+)(in) + H(+)(out) = Na(+)(out) + H(+)(in). The catalysed reaction is K(+)(in) + H(+)(out) = K(+)(out) + H(+)(in). May act in low affinity electroneutral exchange of protons for cations such as Na(+) or K(+) across membranes. May also exchange Li(+) and Cs(+) with a lower affinity. The chain is Sodium/hydrogen exchanger 3 (NHX3) from Arabidopsis thaliana (Mouse-ear cress).